The primary structure comprises 189 residues: Capsid protein (189 aa).

It belongs to the tymoviruses capsid protein family.

The protein localises to the virion. Self-assembles to form a T=3 icosahedral capsid composed of 180 copies of the capsid protein. The capsid encapsulates the single-stranded RNA genome. A pentameric unit may be lost during decapsidation. This is Capsid protein from Brassica.